The following is a 273-amino-acid chain: Rhamnulose-1-phosphate aldolase (273 aa).

The active site involves Glu117. His140, His142, and His211 together coordinate Zn(2+).

This sequence belongs to the aldolase class II family. RhaD subfamily. The cofactor is Zn(2+).

It is found in the cytoplasm. The enzyme catalyses L-rhamnulose 1-phosphate = (S)-lactaldehyde + dihydroxyacetone phosphate. Its pathway is carbohydrate degradation; L-rhamnose degradation; glycerone phosphate from L-rhamnose: step 3/3. Its function is as follows. Catalyzes the reversible cleavage of L-rhamnulose-1-phosphate to dihydroxyacetone phosphate (DHAP) and L-lactaldehyde. This is Rhamnulose-1-phosphate aldolase from Listeria monocytogenes serotype 4b (strain CLIP80459).